The sequence spans 360 residues: Peptide chain release factor 1 (360 aa).

Gln-235 is modified (N5-methylglutamine). The interval 286–311 is disordered; it reads QAQAQADTRRNLLGSGDRSDKIRTYN.

The protein belongs to the prokaryotic/mitochondrial release factor family. Methylated by PrmC. Methylation increases the termination efficiency of RF1.

The protein localises to the cytoplasm. Its function is as follows. Peptide chain release factor 1 directs the termination of translation in response to the peptide chain termination codons UAG and UAA. The sequence is that of Peptide chain release factor 1 from Histophilus somni (strain 2336) (Haemophilus somnus).